The primary structure comprises 237 residues: Neurogenin-1 (237 aa).

The segment at 35-83 is disordered; the sequence is LQQAASASGPPAPARRGAPNISRASEVPGAQDDEQERRRRRGRTRVRSE. The span at 38-53 shows a compositional bias: low complexity; the sequence is AASASGPPAPARRGAP. Positions 92-144 constitute a bHLH domain; it reads SRRVKANDRERNRMHNLNAALDALRSVLPSFPDDTKLTKIETLRFAYNYIWAL. Positions 175–209 are disordered; sequence GPPSPASDAESWGSGAAAASPLSDPSSPAASEDFT. Residues 180 to 207 are compositionally biased toward low complexity; that stretch reads ASDAESWGSGAAAASPLSDPSSPAASED.

In terms of assembly, efficient DNA binding requires dimerization with another bHLH protein. In terms of tissue distribution, expression restricted to the embryonic nervous system.

Its subcellular location is the nucleus. Functionally, acts as a transcriptional regulator. Involved in the initiation of neuronal differentiation. Activates transcription by binding to the E box (5'-CANNTG-3'). Associates with chromatin to enhancer regulatory elements in genes encoding key transcriptional regulators of neurogenesis. This chain is Neurogenin-1 (NEUROG1), found in Homo sapiens (Human).